The chain runs to 234 residues: Sugar fermentation stimulation protein homolog (234 aa).

The protein belongs to the SfsA family.

This Shewanella putrefaciens (strain CN-32 / ATCC BAA-453) protein is Sugar fermentation stimulation protein homolog.